The primary structure comprises 506 residues: Ribose import ATP-binding protein RbsA 2 (506 aa).

2 ABC transporter domains span residues 5–241 (LRLS…VGRR) and 254–498 (ADAP…TAGT). 37–44 (GENGAGKS) contributes to the ATP binding site.

This sequence belongs to the ABC transporter superfamily. Ribose importer (TC 3.A.1.2.1) family. As to quaternary structure, the complex is composed of an ATP-binding protein (RbsA), two transmembrane proteins (RbsC) and a solute-binding protein (RbsB).

It localises to the cell inner membrane. It carries out the reaction D-ribose(out) + ATP + H2O = D-ribose(in) + ADP + phosphate + H(+). In terms of biological role, part of the ABC transporter complex RbsABC involved in ribose import. Responsible for energy coupling to the transport system. The sequence is that of Ribose import ATP-binding protein RbsA 2 from Burkholderia cenocepacia (strain HI2424).